Consider the following 173-residue polypeptide: Protein PLASTID REDOX INSENSITIVE 2, chloroplastic (173 aa).

Residues 1-55 (MATRAWVAAAVALNPQLLPLRSCSPTKSVSPAQRSASMGLRLRSGRPCLGKFVCR) constitute a chloroplast transit peptide.

The protein localises to the plastid. Its subcellular location is the chloroplast stroma. It is found in the chloroplast nucleoid. Functionally, required for the activity of the plastid-encoded RNA polymerase (PEP) and full expression of genes transcribed by PEP. The sequence is that of Protein PLASTID REDOX INSENSITIVE 2, chloroplastic from Zea mays (Maize).